A 193-amino-acid polypeptide reads, in one-letter code: MSNISLIVGLGNPGSEYAQTRHNAGFWFVEQLADKYGITLKNDPKFHGISGRGNIEGHDVRLLLPMTYMNRSGQSVVPFSKFYQIAPEAILIAHDELDMNPGVIRLKTGGGHGGHNGLRDIVPHIGPNFHRLRIGIGHPGSKERVSGHVLGKAPSSEQSLMDGAIDHALSKVKLLVQGQVPQAMNQINAYKPA.

Y17 contacts tRNA. H22 (proton acceptor) is an active-site residue. The tRNA site is built by Y68, N70, and N116.

This sequence belongs to the PTH family. In terms of assembly, monomer.

The protein resides in the cytoplasm. The enzyme catalyses an N-acyl-L-alpha-aminoacyl-tRNA + H2O = an N-acyl-L-amino acid + a tRNA + H(+). In terms of biological role, hydrolyzes ribosome-free peptidyl-tRNAs (with 1 or more amino acids incorporated), which drop off the ribosome during protein synthesis, or as a result of ribosome stalling. Its function is as follows. Catalyzes the release of premature peptidyl moieties from peptidyl-tRNA molecules trapped in stalled 50S ribosomal subunits, and thus maintains levels of free tRNAs and 50S ribosomes. This is Peptidyl-tRNA hydrolase from Acinetobacter baumannii (strain AB307-0294).